The following is a 48-amino-acid chain: Small ribosomal subunit protein uS14 (48 aa).

The Zn(2+) site is built by cysteine 13, cysteine 16, cysteine 31, and cysteine 34.

Belongs to the universal ribosomal protein uS14 family. Zinc-binding uS14 subfamily. As to quaternary structure, part of the 30S ribosomal subunit. Requires Zn(2+) as cofactor.

Binds 16S rRNA, required for the assembly of 30S particles. In Methanopyrus kandleri (strain AV19 / DSM 6324 / JCM 9639 / NBRC 100938), this protein is Small ribosomal subunit protein uS14.